The chain runs to 89 residues: Phytosulfokines 1 (89 aa).

The N-terminal stretch at 1–22 (MVNPGRTARALCLLCLALLLLG) is a signal peptide. Positions 23–79 (QDTHSRKLLLQEKHSHGVGNGTTTTQEPSRENGGSTGSNNNGQLQFDSAKWEEFHTD) are excised as a propeptide. A disordered region spans residues 33 to 70 (QEKHSHGVGNGTTTTQEPSRENGGSTGSNNNGQLQFDS). Asn42 carries an N-linked (GlcNAc...) asparagine glycan. Tyr80 and Tyr82 each carry sulfotyrosine. A propeptide spanning residues 85–89 (DVKKP) is cleaved from the precursor.

Belongs to the phytosulfokine family. Sulfation is important for activity and for the binding to a putative membrane receptor. Post-translationally, PSK-alpha is produced by endopeptidase digestion. PSK-beta is produced from PSK-alpha by exopeptidase digestion. As to expression, expressed throughout the seedling. More abundant in fragments containing shoot or root apexes where cells proliferate vigorously.

The protein localises to the secreted. Promotes plant cell differentiation, organogenesis and somatic embryogenesis as well as cell proliferation. The protein is Phytosulfokines 1 (PSK1) of Oryza sativa subsp. japonica (Rice).